We begin with the raw amino-acid sequence, 242 residues long: UDP-2,3-diacylglucosamine hydrolase (242 aa).

Residues Asp8, His10, Asp41, Asn79, and His114 each coordinate Mn(2+). 79 to 80 (NR) is a substrate binding site. 4 residues coordinate substrate: Asp122, Lys164, Lys167, and His195. Positions 195 and 197 each coordinate Mn(2+).

The protein belongs to the LpxH family. Mn(2+) serves as cofactor.

It localises to the cell inner membrane. The catalysed reaction is UDP-2-N,3-O-bis[(3R)-3-hydroxytetradecanoyl]-alpha-D-glucosamine + H2O = 2-N,3-O-bis[(3R)-3-hydroxytetradecanoyl]-alpha-D-glucosaminyl 1-phosphate + UMP + 2 H(+). It participates in glycolipid biosynthesis; lipid IV(A) biosynthesis; lipid IV(A) from (3R)-3-hydroxytetradecanoyl-[acyl-carrier-protein] and UDP-N-acetyl-alpha-D-glucosamine: step 4/6. Hydrolyzes the pyrophosphate bond of UDP-2,3-diacylglucosamine to yield 2,3-diacylglucosamine 1-phosphate (lipid X) and UMP by catalyzing the attack of water at the alpha-P atom. Involved in the biosynthesis of lipid A, a phosphorylated glycolipid that anchors the lipopolysaccharide to the outer membrane of the cell. This is UDP-2,3-diacylglucosamine hydrolase from Vibrio parahaemolyticus serotype O3:K6 (strain RIMD 2210633).